The primary structure comprises 499 residues: Cysteine--tRNA ligase (499 aa).

Cys31 contributes to the Zn(2+) binding site. The short motif at 33-43 (VTVYDLCHLGH) is the 'HIGH' region element. The Zn(2+) site is built by Cys215, His240, and Glu244. Positions 272–276 (KMSKS) match the 'KMSKS' region motif. An ATP-binding site is contributed by Lys275.

The protein belongs to the class-I aminoacyl-tRNA synthetase family. Monomer. Zn(2+) serves as cofactor.

Its subcellular location is the cytoplasm. It catalyses the reaction tRNA(Cys) + L-cysteine + ATP = L-cysteinyl-tRNA(Cys) + AMP + diphosphate. This chain is Cysteine--tRNA ligase, found in Synechococcus sp. (strain WH7803).